Here is a 164-residue protein sequence, read N- to C-terminus: MRVGVYPGSFDPITKGHLDLIERAASKFDKVIVAVLININKKGMFSIEERVNLIEKCVAKYNNVEVKSFNGLLIDFVRKEKADVIIKGLRSVTDFEYEFQMALMNRELANEVETVFMVTSPNYSYISSSAIKQVASFSGEIKNFVPKEIVEDLEERIISLRGEG.

Residue S9 coordinates substrate. ATP-binding positions include 9 to 10 (SF) and H17. K41, L73, and K87 together coordinate substrate. ATP contacts are provided by residues 88 to 90 (GLR), E98, and 123 to 129 (YSYISSS).

This sequence belongs to the bacterial CoaD family. In terms of assembly, homohexamer. Requires Mg(2+) as cofactor.

Its subcellular location is the cytoplasm. The catalysed reaction is (R)-4'-phosphopantetheine + ATP + H(+) = 3'-dephospho-CoA + diphosphate. It participates in cofactor biosynthesis; coenzyme A biosynthesis; CoA from (R)-pantothenate: step 4/5. Reversibly transfers an adenylyl group from ATP to 4'-phosphopantetheine, yielding dephospho-CoA (dPCoA) and pyrophosphate. This is Phosphopantetheine adenylyltransferase from Clostridium perfringens (strain SM101 / Type A).